The primary structure comprises 413 residues: Serine/threonine-protein phosphatase 2A 55 kDa regulatory subunit B beta isoform (413 aa).

WD repeat units lie at residues 1 to 31 (EFNH…KNQV), 57 to 98 (EIEE…KRPE), 141 to 179 (AHTY…QSFN), and 190 to 230 (ELTE…LCDR). At S245 the chain carries Phosphoserine. WD repeat units lie at residues 249–287 (EIIS…RPIE), 304–345 (ENDC…DVTL), and 380–412 (DFSK…QDKV). Y265 bears the Phosphotyrosine mark. T268 carries the post-translational modification Phosphothreonine.

It belongs to the phosphatase 2A regulatory subunit B family. PP2A consists of a common heterodimeric core enzyme, composed of a 36 kDa catalytic subunit (subunit C) and a 65 kDa constant regulatory subunit (PR65 or subunit A), that associates with a variety of regulatory subunits. Proteins that associate with the core dimer include three families of regulatory subunits B (the R2/B/PR55/B55, R3/B''/PR72/PR130/PR59 and R5/B'/B56 families), the 48 kDa variable regulatory subunit, viral proteins, and cell signaling molecules. Interacts with TOMM22. Interacts with IER5 (via N- and C-terminal regions). Brain.

It is found in the cytoplasm. It localises to the cytoskeleton. Its subcellular location is the membrane. Functionally, the B regulatory subunit might modulate substrate selectivity and catalytic activity, and might also direct the localization of the catalytic enzyme to a particular subcellular compartment. This is Serine/threonine-protein phosphatase 2A 55 kDa regulatory subunit B beta isoform (PPP2R2B) from Oryctolagus cuniculus (Rabbit).